A 317-amino-acid chain; its full sequence is USG-1 protein homolog (317 aa).

It belongs to the aspartate-semialdehyde dehydrogenase family.

The chain is USG-1 protein homolog (usg) from Haemophilus influenzae (strain ATCC 51907 / DSM 11121 / KW20 / Rd).